The chain runs to 489 residues: CUGBP Elav-like family member 1-A (489 aa).

RRM domains lie at 16–99 (IKMF…PADS), 108–188 (RKLF…FADT), and 404–482 (ANLF…LKRS). A necessary for oligomerization and EDEN-dependent deadenylation region spans residues 183–210 (VKFADTQKDKEQKRMTQQLQQQMQQLNA).

This sequence belongs to the CELF/BRUNOL family. As to quaternary structure, oligomer. Oligomerization is required for RNA-binding and EDEN-dependent deadenylation. Phosphorylated during oocyte maturation and dephosphorylated following egg activation. Dephosphorylation is calcium dependent and correlates with the increase in the activity of EDEN-dependent deadenylation.

Its subcellular location is the nucleus. It is found in the cytoplasm. Its function is as follows. RNA-binding protein implicated in the regulation of several post-transcriptional events. May be involved in pre-mRNA alternative splicing, mRNA translation activation and stability. Mediates the rapid and sequence-specific cytoplasmic deadenylation of EDEN-containing maternal mRNAs following fertilization. Binds to AU-rich sequences (AREs) of jun mRNA. Binds to the embryonic deadenylation element (EDEN) motif localized in the 3'-UTR of maternal mRNAs. Binds to RNA containing several repeats of the consensus sequence 5'-UGU-3'. EDEN-dependent deadenylation is enhanced by the presence of an additional cis element composed of three AUU repeats. The chain is CUGBP Elav-like family member 1-A (cugbp1-a) from Xenopus laevis (African clawed frog).